Here is a 284-residue protein sequence, read N- to C-terminus: Bifunctional protein FolD (284 aa).

Residues 165–167 (GRS), S190, and I231 contribute to the NADP(+) site.

It belongs to the tetrahydrofolate dehydrogenase/cyclohydrolase family. Homodimer.

It catalyses the reaction (6R)-5,10-methylene-5,6,7,8-tetrahydrofolate + NADP(+) = (6R)-5,10-methenyltetrahydrofolate + NADPH. It carries out the reaction (6R)-5,10-methenyltetrahydrofolate + H2O = (6R)-10-formyltetrahydrofolate + H(+). The protein operates within one-carbon metabolism; tetrahydrofolate interconversion. Its function is as follows. Catalyzes the oxidation of 5,10-methylenetetrahydrofolate to 5,10-methenyltetrahydrofolate and then the hydrolysis of 5,10-methenyltetrahydrofolate to 10-formyltetrahydrofolate. The chain is Bifunctional protein FolD from Streptococcus thermophilus (strain ATCC BAA-491 / LMD-9).